The sequence spans 609 residues: Sulfite reductase [NADPH] flavoprotein alpha-component (609 aa).

Positions 72-210 (ITLISASQTG…LAAQWRRQLV (139 aa)) constitute a Flavodoxin-like domain. Residues 78 to 83 (SQTGNA) and 125 to 128 (STQG) each bind FMN. The FAD-binding FR-type domain maps to 244-458 (SSPLQATFAV…IEHNDNFRLP (215 aa)). FAD contacts are provided by residues Thr332, Gln366, 396–399 (RLYS), 414–416 (TVG), Tyr420, and 429–432 (GGAS). Residues 529–530 (SR), 535–539 (KIYVQ), and Asp571 each bind NADP(+). Tyr609 contacts FAD.

Belongs to the NADPH-dependent sulphite reductase flavoprotein subunit CysJ family. This sequence in the N-terminal section; belongs to the flavodoxin family. The protein in the C-terminal section; belongs to the flavoprotein pyridine nucleotide cytochrome reductase family. In terms of assembly, alpha(8)-beta(8). The alpha component is a flavoprotein, the beta component is a hemoprotein. Requires FAD as cofactor. The cofactor is FMN.

It catalyses the reaction hydrogen sulfide + 3 NADP(+) + 3 H2O = sulfite + 3 NADPH + 4 H(+). It functions in the pathway sulfur metabolism; hydrogen sulfide biosynthesis; hydrogen sulfide from sulfite (NADPH route): step 1/1. Component of the sulfite reductase complex that catalyzes the 6-electron reduction of sulfite to sulfide. This is one of several activities required for the biosynthesis of L-cysteine from sulfate. The flavoprotein component catalyzes the electron flow from NADPH -&gt; FAD -&gt; FMN to the hemoprotein component. In Pectobacterium atrosepticum (strain SCRI 1043 / ATCC BAA-672) (Erwinia carotovora subsp. atroseptica), this protein is Sulfite reductase [NADPH] flavoprotein alpha-component.